Consider the following 239-residue polypeptide: Fatty acid metabolism regulator protein (239 aa).

Residues 6–74 (QSPAGFAEEY…HGKPTKVNNF (69 aa)) enclose the HTH gntR-type domain. The H-T-H motif DNA-binding region spans 34 to 53 (ERELSELIGVTRTTLREVLQ).

In terms of assembly, homodimer.

Its subcellular location is the cytoplasm. Its function is as follows. Multifunctional regulator of fatty acid metabolism. The sequence is that of Fatty acid metabolism regulator protein from Serratia proteamaculans (strain 568).